The chain runs to 334 residues: Beta-hexosaminidase (334 aa).

Residues Asp-60, Arg-68, Arg-133, and 163 to 164 contribute to the substrate site; that span reads KH. The active-site Proton donor/acceptor is the His-176. Asp-247 (nucleophile) is an active-site residue.

This sequence belongs to the glycosyl hydrolase 3 family. NagZ subfamily.

It localises to the cytoplasm. It carries out the reaction Hydrolysis of terminal non-reducing N-acetyl-D-hexosamine residues in N-acetyl-beta-D-hexosaminides.. Its pathway is cell wall biogenesis; peptidoglycan recycling. Plays a role in peptidoglycan recycling by cleaving the terminal beta-1,4-linked N-acetylglucosamine (GlcNAc) from peptide-linked peptidoglycan fragments, giving rise to free GlcNAc, anhydro-N-acetylmuramic acid and anhydro-N-acetylmuramic acid-linked peptides. The protein is Beta-hexosaminidase of Xanthomonas euvesicatoria pv. vesicatoria (strain 85-10) (Xanthomonas campestris pv. vesicatoria).